Reading from the N-terminus, the 182-residue chain is Oligoribonuclease (182 aa).

An Exonuclease domain is found at 8-171 (LIWIDLEMTG…DDIRESIKEL (164 aa)). Residue Y129 is part of the active site.

This sequence belongs to the oligoribonuclease family.

The protein localises to the cytoplasm. Functionally, 3'-to-5' exoribonuclease specific for small oligoribonucleotides. This Haemophilus influenzae (strain ATCC 51907 / DSM 11121 / KW20 / Rd) protein is Oligoribonuclease (orn).